Reading from the N-terminus, the 755-residue chain is Polyribonucleotide nucleotidyltransferase (755 aa).

Mg(2+) contacts are provided by Asp-545 and Asp-551. One can recognise a KH domain in the interval 611–670; it reads PRITAITVPVNKIGEVIGPKGKTINSITEETGANISIEEDGTVYVSAASGAAAEAAIEKI. The S1 motif domain maps to 682–751; that stretch reads GERFLGTVVK…NRGKISLAPV (70 aa).

The protein belongs to the polyribonucleotide nucleotidyltransferase family. Mg(2+) serves as cofactor.

It is found in the cytoplasm. The enzyme catalyses RNA(n+1) + phosphate = RNA(n) + a ribonucleoside 5'-diphosphate. Functionally, involved in mRNA degradation. Catalyzes the phosphorolysis of single-stranded polyribonucleotides processively in the 3'- to 5'-direction. This Corynebacterium diphtheriae (strain ATCC 700971 / NCTC 13129 / Biotype gravis) protein is Polyribonucleotide nucleotidyltransferase.